Consider the following 309-residue polypeptide: Aspartate carbamoyltransferase catalytic subunit (309 aa).

Carbamoyl phosphate contacts are provided by arginine 59 and threonine 60. Lysine 87 contacts L-aspartate. 3 residues coordinate carbamoyl phosphate: arginine 109, histidine 139, and glutamine 142. Residues arginine 172 and arginine 224 each coordinate L-aspartate. The carbamoyl phosphate site is built by alanine 265 and proline 266.

Belongs to the aspartate/ornithine carbamoyltransferase superfamily. ATCase family. In terms of assembly, heterododecamer (2C3:3R2) of six catalytic PyrB chains organized as two trimers (C3), and six regulatory PyrI chains organized as three dimers (R2).

It catalyses the reaction carbamoyl phosphate + L-aspartate = N-carbamoyl-L-aspartate + phosphate + H(+). The protein operates within pyrimidine metabolism; UMP biosynthesis via de novo pathway; (S)-dihydroorotate from bicarbonate: step 2/3. Its function is as follows. Catalyzes the condensation of carbamoyl phosphate and aspartate to form carbamoyl aspartate and inorganic phosphate, the committed step in the de novo pyrimidine nucleotide biosynthesis pathway. The polypeptide is Aspartate carbamoyltransferase catalytic subunit (Streptococcus uberis (strain ATCC BAA-854 / 0140J)).